The primary structure comprises 474 residues: Peroxisome proliferator-activated receptor alpha (474 aa).

The nuclear receptor DNA-binding region spans 106-180 (NLECRVCSDK…VGMSHNAIRF (75 aa)). NR C4-type zinc fingers lie at residues 109-129 (CRVCSDKASGFHYGVHACEGC) and 146-168 (CERMCKIQKKNRNKCQYCRFEKC). Residues 245–472 (FVIHDMETLC…HPLLQEIYRD (228 aa)) enclose the NR LBD domain.

This sequence belongs to the nuclear hormone receptor family. NR1 subfamily. Heterodimer with the retinoid X receptor. In terms of tissue distribution, ubiquitous.

The protein resides in the nucleus. In terms of biological role, ligand-activated transcription factor. Key regulator of lipid metabolism. Activated by lipids. Receptor for peroxisome proliferators such as hypolipidemic drugs and fatty acids. Once activated by a ligand, the receptor binds to promoter elements of target genes. Regulates the peroxisomal beta-oxidation pathway of fatty acids. The sequence is that of Peroxisome proliferator-activated receptor alpha (ppara) from Xenopus laevis (African clawed frog).